A 379-amino-acid chain; its full sequence is Homoserine O-succinyltransferase (379 aa).

The region spanning 51 to 360 (NAVLICHALS…DAPQGHDAFL (310 aa)) is the AB hydrolase-1 domain. The active-site Nucleophile is Ser-157. Arg-227 is a binding site for substrate. Active-site residues include Asp-323 and His-356. A substrate-binding site is contributed by Asp-357.

This sequence belongs to the AB hydrolase superfamily. MetX family. In terms of assembly, homodimer.

Its subcellular location is the cytoplasm. The catalysed reaction is L-homoserine + succinyl-CoA = O-succinyl-L-homoserine + CoA. It functions in the pathway amino-acid biosynthesis; L-methionine biosynthesis via de novo pathway; O-succinyl-L-homoserine from L-homoserine: step 1/1. Its function is as follows. Transfers a succinyl group from succinyl-CoA to L-homoserine, forming succinyl-L-homoserine. The sequence is that of Homoserine O-succinyltransferase from Ectopseudomonas mendocina (strain ymp) (Pseudomonas mendocina).